The following is a 137-amino-acid chain: Large-conductance mechanosensitive channel (137 aa).

The next 2 membrane-spanning stretches (helical) occupy residues Phe10–Gly30 and Gly76–Val96.

The protein belongs to the MscL family. In terms of assembly, homopentamer.

It localises to the cell inner membrane. Its function is as follows. Channel that opens in response to stretch forces in the membrane lipid bilayer. May participate in the regulation of osmotic pressure changes within the cell. In Yersinia pseudotuberculosis serotype O:1b (strain IP 31758), this protein is Large-conductance mechanosensitive channel.